The following is a 517-amino-acid chain: Crotonobetaine/carnitine--CoA ligase (517 aa).

The protein belongs to the ATP-dependent AMP-binding enzyme family.

It carries out the reaction 4-(trimethylamino)butanoate + ATP + CoA = 4-(trimethylamino)butanoyl-CoA + AMP + diphosphate. It catalyses the reaction crotonobetaine + ATP + CoA = crotonobetainyl-CoA + AMP + diphosphate. The catalysed reaction is (R)-carnitine + ATP + CoA = (R)-carnitinyl-CoA + AMP + diphosphate. It participates in amine and polyamine metabolism; carnitine metabolism. In terms of biological role, catalyzes the transfer of CoA to carnitine, generating the initial carnitinyl-CoA needed for the CaiB reaction cycle. Also has activity toward crotonobetaine and gamma-butyrobetaine. This Escherichia coli O45:K1 (strain S88 / ExPEC) protein is Crotonobetaine/carnitine--CoA ligase.